Consider the following 765-residue polypeptide: Dipeptidyl peptidase 4 (765 aa).

Over 1-6 (MKTPWK) the chain is Cytoplasmic. Residues 7-29 (VLLGLLAIAALVTVITVPVVLLT) form a helical; Signal-anchor for type II membrane protein membrane-spanning segment. The Extracellular segment spans residues 30-765 (KGNDASTDSR…HFLKQCFSLL (736 aa)). Residues N84, N91, N149, N218, N228, N271, N280, N320, and N392 are each glycosylated (N-linked (GlcNAc...) asparagine). 3 disulfides stabilise this stretch: C384/C393, C443/C446, and C453/C471. An N-linked (GlcNAc...) asparagine glycan is attached at N495. Residue S629 is the Charge relay system of the active site. C648 and C761 form a disulfide bridge. Residue N684 is glycosylated (N-linked (GlcNAc...) asparagine). Active-site charge relay system residues include D707 and H739.

The protein belongs to the peptidase S9B family. DPPIV subfamily. In terms of assembly, monomer. Homodimer. Heterodimer with Seprase (FAP). Requires homodimerization for optimal dipeptidyl peptidase activity and T-cell costimulation. Found in a membrane raft complex, at least composed of BCL10, CARD11, DPP4 and IKBKB. Associates with collagen. Interacts with PTPRC; the interaction is enhanced in an interleukin-12-dependent manner in activated lymphocytes. Interacts (via extracellular domain) with ADA; does not inhibit its dipeptidyl peptidase activity. Interacts with CAV1 (via the N-terminus); the interaction is direct. Interacts (via cytoplasmic tail) with CARD11 (via PDZ domain); its homodimerization is necessary for interaction with CARD11. Interacts with IGF2R; the interaction is direct. Interacts with GPC3. In terms of processing, the soluble form (Dipeptidyl peptidase 4 soluble form also named SDPP) derives from the membrane form (Dipeptidyl peptidase 4 membrane form also named MDPP) by proteolytic processing. N- and O-Glycosylated. Post-translationally, phosphorylated. Mannose 6-phosphate residues in the carbohydrate moiety are necessary for interaction with IGF2R in activated T-cells. Mannose 6-phosphorylation is induced during T-cell activation. As to expression, intestinal epithelium, dendritic cells and several immune system tissues.

The protein resides in the secreted. It is found in the cell membrane. The protein localises to the apical cell membrane. It localises to the cell projection. Its subcellular location is the invadopodium membrane. The protein resides in the lamellipodium membrane. It is found in the cell junction. The protein localises to the membrane raft. The catalysed reaction is Release of an N-terminal dipeptide, Xaa-Yaa-|-Zaa-, from a polypeptide, preferentially when Yaa is Pro, provided Zaa is neither Pro nor hydroxyproline.. Inhibited by GPC3 and diprotin A. Cell surface glycoprotein receptor involved in the costimulatory signal essential for T-cell receptor (TCR)-mediated T-cell activation. Acts as a positive regulator of T-cell coactivation, by binding at least ADA, CAV1, IGF2R, and PTPRC. Its binding to CAV1 and CARD11 induces T-cell proliferation and NF-kappa-B activation in a T-cell receptor/CD3-dependent manner. Its interaction with ADA also regulates lymphocyte-epithelial cell adhesion. In association with FAP is involved in the pericellular proteolysis of the extracellular matrix (ECM), the migration and invasion of endothelial cells into the ECM. May be involved in the promotion of lymphatic endothelial cells adhesion, migration and tube formation. When overexpressed, enhanced cell proliferation, a process inhibited by GPC3. Also acts as a serine exopeptidase with a dipeptidyl peptidase activity that regulates various physiological processes by cleaving peptides in the circulation, including many chemokines, mitogenic growth factors, neuropeptides and peptide hormones. Removes N-terminal dipeptides sequentially from polypeptides having unsubstituted N-termini provided that the penultimate residue is proline. The polypeptide is Dipeptidyl peptidase 4 (DPP4) (Bos taurus (Bovine)).